A 131-amino-acid polypeptide reads, in one-letter code: Maturin (131 aa).

Tyr34 is modified (phosphotyrosine). The span at 107–120 shows a compositional bias: acidic residues; sequence FEEYSADVEEEEPE. The interval 107–131 is disordered; sequence FEEYSADVEEEEPEADHPQMGVSQQ.

The protein belongs to the MTURN family. Post-translationally, phosphorylation at Tyr-34 is essential for its ability to promote megakaryocyte differentiation. In terms of tissue distribution, expressed in the thymus, bone marrow and spleen.

It localises to the cytoplasm. Its function is as follows. Promotes megakaryocyte differentiation by enhancing ERK and JNK signaling as well as up-regulating RUNX1 and FLI1 expression. Represses NF-kappa-B transcriptional activity by inhibiting phosphorylation of RELA at 'Ser- 536'. May be involved in early neuronal development. The polypeptide is Maturin (Mturn) (Mus musculus (Mouse)).